The sequence spans 657 residues: Probable cobalt/nickel-exporting P-type ATPase (657 aa).

The next 5 helical transmembrane spans lie at 40–60 (WATV…NGAP), 62–82 (AMWW…SAWA), 101–121 (AAVG…IVIF), 268–288 (LGMV…GADL), and 299–319 (MIVA…LSAI). The active-site 4-aspartylphosphate intermediate is D347. The Mg(2+) site is built by D543 and D547. A helical membrane pass occupies residues 596 to 618 (VVTVNLAIAATFIAVLVLWDLFG).

Belongs to the cation transport ATPase (P-type) (TC 3.A.3) family. Type IB subfamily.

The protein localises to the cell membrane. Functionally, involved in heavy metal homeostasis. Probably exports nickel and cobalt ions out of the cell. In Mycobacterium bovis (strain ATCC BAA-935 / AF2122/97), this protein is Probable cobalt/nickel-exporting P-type ATPase (ctpD).